Consider the following 1006-residue polypeptide: Unconventional myosin-Id (1006 aa).

At Ala-2 the chain carries N-acetylalanine. One can recognise a Myosin motor domain in the interval 9–695 (FGKADFVLMD…TLFTLEELRA (687 aa)). Residue 102–109 (GESGAGKT) coordinates ATP. Ser-200 bears the Phosphoserine mark. Tyr-536 is modified (phosphotyrosine). The tract at residues 572-594 (MIALVDNLASKEPYYVRCIKPND) is actin-binding. IQ domains follow at residues 699-719 (IRIV…MRYK) and 721-741 (TKAA…SYIQ). Residues 812–1005 (GQRADLGLQR…RSGFILSVPG (194 aa)) enclose the TH1 domain.

It belongs to the TRAFAC class myosin-kinesin ATPase superfamily. Myosin family. As to quaternary structure, interacts (via the two IQ motifs) with calmodulin. Binds an additional calmodulin chain via a third, C-terminal region. Interacts with F-actin.

The protein resides in the cytoplasm. Its subcellular location is the perikaryon. The protein localises to the cell projection. It localises to the dendrite. It is found in the early endosome. The protein resides in the cell cortex. Unconventional myosin that functions as actin-based motor protein with ATPase activity. Plays a role in endosomal protein trafficking, and especially in the transfer of cargo proteins from early to recycling endosomes. Required for normal planar cell polarity in ciliated tracheal cells, for normal rotational polarity of cilia, and for coordinated, unidirectional ciliary movement in the trachea. Required for normal, polarized cilia organization in brain ependymal epithelial cells. The polypeptide is Unconventional myosin-Id (MYO1D) (Canis lupus familiaris (Dog)).